The following is a 755-amino-acid chain: Cellulose synthase-like protein B3 (755 aa).

2 helical membrane-spanning segments follow: residues 24 to 44 and 51 to 71; these read VVDL…ILLM and WVVA…ITSI. Catalysis depends on residues Asp136 and Asp461. The next 6 helical transmembrane spans lie at 534 to 556, 569 to 589, 615 to 635, 674 to 694, 702 to 722, and 733 to 753; these read YLYI…LPAY, VYLG…LWEF, LFSI…VFIV, FLPG…CSVG, GSGL…LPFL, and IPWS…VFSV.

This sequence belongs to the glycosyltransferase 2 family. Plant cellulose synthase-like B subfamily. Expressed in young seedlings, primarily in the vascular tissue.

It localises to the golgi apparatus membrane. Its function is as follows. Thought to be a Golgi-localized beta-glycan synthase that polymerize the backbones of noncellulosic polysaccharides (hemicelluloses) of plant cell wall. The chain is Cellulose synthase-like protein B3 (CSLB3) from Arabidopsis thaliana (Mouse-ear cress).